A 100-amino-acid polypeptide reads, in one-letter code: Urease subunit gamma (100 aa).

Belongs to the urease gamma subunit family. As to quaternary structure, heterotrimer of UreA (gamma), UreB (beta) and UreC (alpha) subunits. Three heterotrimers associate to form the active enzyme.

It is found in the cytoplasm. It carries out the reaction urea + 2 H2O + H(+) = hydrogencarbonate + 2 NH4(+). Its pathway is nitrogen metabolism; urea degradation; CO(2) and NH(3) from urea (urease route): step 1/1. The sequence is that of Urease subunit gamma from Paraburkholderia phymatum (strain DSM 17167 / CIP 108236 / LMG 21445 / STM815) (Burkholderia phymatum).